The chain runs to 616 residues: Probable beta-hexosaminidase ARB_01353 (616 aa).

An N-terminal signal peptide occupies residues 1 to 20 (MRFAKALAITAVLLSGVVEA). Residues 96–117 (KFDPFPDQSSKPKEKRQNAPPG) are disordered. Residue Asn-333 is glycosylated (N-linked (GlcNAc...) asparagine). Glu-361 (proton donor) is an active-site residue.

The protein belongs to the glycosyl hydrolase 20 family.

The protein resides in the secreted. It catalyses the reaction Hydrolysis of terminal non-reducing N-acetyl-D-hexosamine residues in N-acetyl-beta-D-hexosaminides.. Functionally, beta-hexosaminidase that shows a broad substrate specificity. The polypeptide is Probable beta-hexosaminidase ARB_01353 (Arthroderma benhamiae (strain ATCC MYA-4681 / CBS 112371) (Trichophyton mentagrophytes)).